We begin with the raw amino-acid sequence, 380 residues long: RNA-binding motif protein, Y chromosome, family 9 (380 aa).

The RRM domain maps to 8 to 86; that stretch reads GKIFIGGLNI…KRIKVKQARR (79 aa). Disordered stretches follow at residues 82-226 and 279-358; these read KQAR…STSR and HEAP…YSAS. Over residues 166-178 the composition is skewed to polar residues; that stretch reads RSATSAQTRSNTG. 2 stretches are compositionally biased toward basic and acidic residues: residues 180–190 and 333–351; these read RGREPHRREIS and IDREYFDREGRQERGHSPK.

In terms of tissue distribution, testis-specific.

It is found in the nucleus. RNA-binding protein which may be involved in spermatogenesis. May be required for sperm development, possibly by participating in pre-mRNA splicing in the testis. The protein is RNA-binding motif protein, Y chromosome, family 9 of Mus musculus (Mouse).